A 100-amino-acid polypeptide reads, in one-letter code: Small ribosomal subunit protein uS14 (100 aa).

The protein belongs to the universal ribosomal protein uS14 family. As to quaternary structure, part of the 30S ribosomal subunit. Contacts proteins S3 and S10.

Binds 16S rRNA, required for the assembly of 30S particles and may also be responsible for determining the conformation of the 16S rRNA at the A site. This chain is Small ribosomal subunit protein uS14, found in Prochlorococcus marinus (strain NATL2A).